A 509-amino-acid polypeptide reads, in one-letter code: Histidine ammonia-lyase (509 aa).

Positions 144–146 (ASG) form a cross-link, 5-imidazolinone (Ala-Gly). Residue Ser-145 is modified to 2,3-didehydroalanine (Ser).

It belongs to the PAL/histidase family. Contains an active site 4-methylidene-imidazol-5-one (MIO), which is formed autocatalytically by cyclization and dehydration of residues Ala-Ser-Gly.

The protein localises to the cytoplasm. It carries out the reaction L-histidine = trans-urocanate + NH4(+). It participates in amino-acid degradation; L-histidine degradation into L-glutamate; N-formimidoyl-L-glutamate from L-histidine: step 1/3. The protein is Histidine ammonia-lyase of Pseudoalteromonas atlantica (strain T6c / ATCC BAA-1087).